The sequence spans 81 residues: Arminin 2a (81 aa).

Residues 1–18 (MKTVFAILFLAFIALTYA) form the signal peptide. Residues 19–57 (RSYEDVKEEIKNEVVKEILEDLEEESDELDDKSKEINDA) constitute a propeptide that is removed on maturation. Residue Ala78 is modified to Alanine amide.

This sequence belongs to the arminin family. In terms of tissue distribution, expressed in entodermal epithelium along the body column.

The protein resides in the secreted. The protein localises to the target cell membrane. Functionally, antimicrobial peptide with a broad-spectrum antimicrobial activity. Keeps its antibacterial activity under a wide range of salt concentrations that mimic physiological conditions of human blood, which is surprising, since Hydra is an obligate freshwater animal with nearly no salt tolerance. Does not affect red blood cells. The polypeptide is Arminin 2a (Hydra vulgaris (Hydra)).